Here is a 239-residue protein sequence, read N- to C-terminus: tRNA (guanine-N(7)-)-methyltransferase (239 aa).

4 residues coordinate S-adenosyl-L-methionine: glutamate 69, glutamate 94, aspartate 121, and aspartate 144. Aspartate 144 is a catalytic residue. Residues lysine 148, aspartate 180, and threonine 217–glutamate 220 contribute to the substrate site.

This sequence belongs to the class I-like SAM-binding methyltransferase superfamily. TrmB family. In terms of assembly, monomer.

It catalyses the reaction guanosine(46) in tRNA + S-adenosyl-L-methionine = N(7)-methylguanosine(46) in tRNA + S-adenosyl-L-homocysteine. It participates in tRNA modification; N(7)-methylguanine-tRNA biosynthesis. Catalyzes the formation of N(7)-methylguanine at position 46 (m7G46) in tRNA. This chain is tRNA (guanine-N(7)-)-methyltransferase, found in Buchnera aphidicola subsp. Acyrthosiphon pisum (strain 5A).